The following is a 1030-amino-acid chain: MMS19 nucleotide excision repair protein homolog (1030 aa).

Ala-2 carries the post-translational modification N-acetylalanine. HEAT repeat units lie at residues 866–904 (QRFFTDNVPALVRGFHAAPQDVKPNYLKGLSHVLNRLPK), 908–946 (LPELPTLLSLLLEALSCPDSVVQLSTLSCLQPLLLEAPQ), 949–987 (SLHVDTLITKFLNLSASPSMAVRIAALQCMHALTRLPTP), and 990–1028 (LPYKPQVIRALAKPLDDKKRLVRKEAVSARGEWFLLGSP). Ser-1027 is subject to Phosphoserine.

It belongs to the MET18/MMS19 family. In terms of assembly, component of the CIA complex. In the CIA complex, interacts directly with CIAO2B and CIAO3. Component of the MMXD complex, composed of CIAO1, ERCC2, CIAO2B, MMS19 and SLC25A5. Interacts with CIAO2B; the interaction is direct. Interacts with ERCC2/XPD; the interaction is direct. Interacts with ERCC3/XPB and NCOA3/RAC3. Interacts with RTEL1; the interaction mediates the association of RTEL1 with the CIA complex. Interacts with BRIP1. Interacts with KIF4A; the interaction facilitates the transfer of Fe-S clusters to KIF4A to ensure proper localization of KIF4A to the mitotic machinery components. Interacts with CCDC117; the interaction is indirect. Post-translationally, ubiquitinated; undergoes 'Lys-48'-linked polyubiquitination.

The protein resides in the nucleus. Its subcellular location is the cytoplasm. It is found in the cytoskeleton. The protein localises to the spindle. In terms of biological role, key component of the cytosolic iron-sulfur protein assembly (CIA) complex, a multiprotein complex that mediates the incorporation of iron-sulfur cluster into apoproteins specifically involved in DNA metabolism and genomic integrity. In the CIA complex, MMS19 acts as an adapter between early-acting CIA components and a subset of cellular target Fe/S proteins such as ERCC2/XPD, FANCJ and RTEL1, thereby playing a key role in nucleotide excision repair (NER), homologous recombination-mediated double-strand break DNA repair, DNA replication and RNA polymerase II (POL II) transcription. As a CIA complex component and in collaboration with CIAO1 and CIAO2, binds to and facilitates the assembly of most cytosolic-nuclear Fe/S proteins. As part of the mitotic spindle-associated MMXD complex, plays a role in chromosome segregation, probably by facilitating iron-sulfur cluster assembly into ERCC2/XPD. Together with CIAO2, facilitates the transfer of Fe-S clusters to the motor protein KIF4A, which ensures proper localization of KIF4A to mitotic machinery components to promote the progression of mitosis. Indirectly acts as a transcriptional coactivator of estrogen receptor (ER), via its role in iron-sulfur insertion into some component of the TFIIH-machinery. This chain is MMS19 nucleotide excision repair protein homolog, found in Bos taurus (Bovine).